Reading from the N-terminus, the 329-residue chain is G-protein coupled receptor 3 (329 aa).

At 1-43 the chain is on the extracellular side; sequence MMWGAGRSMAWFSAGSGSVNVSIDPAEEPTGPATLLPSPRAWD. The N-linked (GlcNAc...) asparagine glycan is linked to N20. Residues 44 to 64 traverse the membrane as a helical segment; sequence VVLCISGTLVSCENALVVAII. Topologically, residues 65–73 are cytoplasmic; that stretch reads VGTPAFRAP. Residues 74 to 94 traverse the membrane as a helical segment; it reads MFLLVGSLAVADLLAGLGLVL. Over 95 to 108 the chain is Extracellular; it reads HFAADFCIGSPEMS. The chain crosses the membrane as a helical span at residues 109–129; sequence LVLVGVLATAFTASIGSLLAI. Residues 130-153 lie on the Cytoplasmic side of the membrane; that stretch reads TVDRYLSLYNALTYYSETTVTRTY. A helical transmembrane segment spans residues 154-174; sequence VMLALVWVGALGLGLVPVLAW. Residues 175–192 are Extracellular-facing; it reads NCRDGLTTCGVVYPLSKN. A helical membrane pass occupies residues 193–213; that stretch reads HLVVLAIVFFMVFGIMLQLYA. Topologically, residues 214 to 247 are cytoplasmic; sequence QICRIVCRHAQQIALQRHLLPASHYVATRKGIAT. Residues 248–268 traverse the membrane as a helical segment; that stretch reads LAVVLGAFAACWLPFTVYCLL. The Extracellular portion of the chain corresponds to 269 to 277; the sequence is GDANSPPLY. Residues 278 to 298 traverse the membrane as a helical segment; it reads TYLTLLPATYNSMINPVIYAF. Over 299-329 the chain is Cytoplasmic; it reads RNQDVQKVLWAICCCCSTSKIPFRSRSPSDV. C312 is lipidated: S-palmitoyl cysteine. A phosphoserine mark is found at S323, S325, and S327.

It belongs to the G-protein coupled receptor 1 family. As to expression, abundantly expressed in granule neurons at all development stages. Enriched in the longest tips of neurites during differentiation of hippocampal neurons.

It is found in the cell membrane. Its function is as follows. Constitutively active G-protein coupled receptor that maintains high 3'-5'-cyclic adenosine monophosphate (cAMP) levels that a plays a role in serveral processes including meiotic arrest in oocytes or neuronal development via activation of numerous intracellular signaling pathways. Acts as an essential activator of thermogenic adipocytes and drives thermogenesis via its intrinsic G(s)-coupling activity without the requirement of a ligand. Has a potential role in modulating a number of brain functions, including behavioral responses to stress, amyloid-beta peptide generation in neurons. Stimulates neurite outgrowth in cerebellar granular neurons modulated via PKA, ERK, and most strongly PI3K-mediated signaling pathways. In Rattus norvegicus (Rat), this protein is G-protein coupled receptor 3 (Gpr3).